A 66-amino-acid polypeptide reads, in one-letter code: UPF0370 protein YpfN (66 aa).

The chain crosses the membrane as a helical span at residues 4–24 (LAKYWWILVLVFLVGVLLNVI). The interval 39–66 (KPELPPHRDFNDKWDDEDGWPKKDQPKK) is disordered. Residues 42-66 (LPPHRDFNDKWDDEDGWPKKDQPKK) are compositionally biased toward basic and acidic residues.

This sequence belongs to the UPF0370 family.

It localises to the cell membrane. The sequence is that of UPF0370 protein YpfN from Salmonella paratyphi B (strain ATCC BAA-1250 / SPB7).